Reading from the N-terminus, the 455-residue chain is RQC trigger complex subunit RQT4 homolog (455 aa).

Disordered regions lie at residues 64 to 98 (STHSGNSPSIMKNKKNVTPNNNIRQKNTATSSHPS) and 118 to 148 (PASRNKSQSNNISSHEKSSKTTKNVSPGVMT). Polar residues-rich tracts occupy residues 65–98 (THSGNSPSIMKNKKNVTPNNNIRQKNTATSSHPS) and 119–130 (ASRNKSQSNNIS). Position 70 is a phosphoserine (serine 70). Position 380 is a phosphoserine (serine 380).

As to quaternary structure, component of the RQT (ribosome quality control trigger) complex.

It localises to the cytoplasm. Its subcellular location is the cytosol. In terms of biological role, probably functions as part of the RQC trigger (RQT) complex that activates the ribosome quality control (RQC) pathway, a pathway that degrades nascent peptide chains during problematic translation. The polypeptide is RQC trigger complex subunit RQT4 homolog (Schizosaccharomyces pombe (strain 972 / ATCC 24843) (Fission yeast)).